The following is a 423-amino-acid chain: Glucose-1-phosphate adenylyltransferase (423 aa).

Alpha-D-glucose 1-phosphate contacts are provided by residues Tyr107, Gly172, 187–188 (EK), and Ser205.

Belongs to the bacterial/plant glucose-1-phosphate adenylyltransferase family. Homotetramer.

The enzyme catalyses alpha-D-glucose 1-phosphate + ATP + H(+) = ADP-alpha-D-glucose + diphosphate. It functions in the pathway glycan biosynthesis; glycogen biosynthesis. In terms of biological role, involved in the biosynthesis of ADP-glucose, a building block required for the elongation reactions to produce glycogen. Catalyzes the reaction between ATP and alpha-D-glucose 1-phosphate (G1P) to produce pyrophosphate and ADP-Glc. The polypeptide is Glucose-1-phosphate adenylyltransferase (Albidiferax ferrireducens (strain ATCC BAA-621 / DSM 15236 / T118) (Rhodoferax ferrireducens)).